The chain runs to 737 residues: Phosphoribosylformylglycinamidine synthase subunit PurL (737 aa).

The active site involves histidine 50. 2 residues coordinate ATP: tyrosine 53 and lysine 92. Glutamate 94 is a Mg(2+) binding site. Residues 95–98 (SHNH) and arginine 117 each bind substrate. Histidine 96 serves as the catalytic Proton acceptor. Residue aspartate 118 coordinates Mg(2+). Residue glutamine 241 participates in substrate binding. Aspartate 269 lines the Mg(2+) pocket. Residue 313 to 315 (ESQ) participates in substrate binding. The ATP site is built by aspartate 494 and glycine 531. Asparagine 532 contacts Mg(2+). Serine 534 is a substrate binding site.

Belongs to the FGAMS family. Monomer. Part of the FGAM synthase complex composed of 1 PurL, 1 PurQ and 2 PurS subunits.

Its subcellular location is the cytoplasm. The catalysed reaction is N(2)-formyl-N(1)-(5-phospho-beta-D-ribosyl)glycinamide + L-glutamine + ATP + H2O = 2-formamido-N(1)-(5-O-phospho-beta-D-ribosyl)acetamidine + L-glutamate + ADP + phosphate + H(+). Its pathway is purine metabolism; IMP biosynthesis via de novo pathway; 5-amino-1-(5-phospho-D-ribosyl)imidazole from N(2)-formyl-N(1)-(5-phospho-D-ribosyl)glycinamide: step 1/2. Its function is as follows. Part of the phosphoribosylformylglycinamidine synthase complex involved in the purines biosynthetic pathway. Catalyzes the ATP-dependent conversion of formylglycinamide ribonucleotide (FGAR) and glutamine to yield formylglycinamidine ribonucleotide (FGAM) and glutamate. The FGAM synthase complex is composed of three subunits. PurQ produces an ammonia molecule by converting glutamine to glutamate. PurL transfers the ammonia molecule to FGAR to form FGAM in an ATP-dependent manner. PurS interacts with PurQ and PurL and is thought to assist in the transfer of the ammonia molecule from PurQ to PurL. The chain is Phosphoribosylformylglycinamidine synthase subunit PurL from Nitrobacter winogradskyi (strain ATCC 25391 / DSM 10237 / CIP 104748 / NCIMB 11846 / Nb-255).